The primary structure comprises 398 residues: Immunoglobulin heavy constant alpha 1 (398 aa).

The Extracellular segment spans residues 1–364 (ASPTSPKVFP…TPGANLWPTT (364 aa)). The Ig-like 1 domain maps to 6-98 (PKVFPLSLCS…HYTNPSQDVT (93 aa)). Intrachain disulfides connect Cys-26/Cys-85 and Cys-77/Cys-101. Positions 96 to 122 (DVTVPCPVPSTPPTPSPSTPPTPSPSC) are disordered. Positions 101–119 (CPVPSTPPTPSPSTPPTPS) are enriched in pro residues. Ser-105 carries O-linked (GalNAc...) serine glycosylation. O-linked (GalNAc...) threonine glycans are attached at residues Thr-106 and Thr-109. O-linked (GalNAc...) serine glycosylation is found at Ser-111 and Ser-113. O-linked (GalNAc...) threonine glycosylation is found at Thr-114 and Thr-117. O-linked (GalNAc...) serine glycosylation is found at Ser-119 and Ser-121. 3 disulfide bridges follow: Cys-123–Cys-180, Cys-147–Cys-204, and Cys-250–Cys-313. Ig-like domains are found at residues 125–220 (PRLS…ATLS) and 228–330 (PEVH…KTID). An N-linked (GlcNAc...) (complex) asparagine glycan is attached at Asn-144. The N-linked (GlcNAc...) (complex) asparagine glycan is linked to Pro-340. Position 352 (Glu-352) interacts with 3-hydroxy-L-kynurenine. The helical transmembrane segment at 365-383 (ITFLTLFLLSLFYSTALTV) threads the bilayer. Over 384 to 398 (TSVRGPSGNREGPQY) the chain is Cytoplasmic.

As to quaternary structure, immunoglobulins are composed of two identical heavy chains and two identical light chains; disulfide-linked. Monomeric or polymeric. Part of the secretory IgA (sIgA) complex that consists of two, four or five IgA monomers, and two additional non-Ig polypeptides, namely the JCHAIN and the secretory component (the proteolytic product of PIGR). In terms of processing, 3-Hydroxykynurenine, an oxidized tryptophan metabolite that is common in biological fluids, reacts with alpha-1-microglobulin to form heterogeneous polycyclic chromophores including hydroxanthommatin. The chromophore reacts with accessible cysteines forming non-reducible thioether cross-links with Ig alpha-1 chain C region Cys-352. N- and O-glycosylated. N-glycan at Asn-144: Hex5HexNAc4.

The protein resides in the secreted. The protein localises to the cell membrane. In terms of biological role, constant region of immunoglobulin heavy chains. Immunoglobulins, also known as antibodies, are membrane-bound or secreted glycoproteins produced by B lymphocytes. In the recognition phase of humoral immunity, the membrane-bound immunoglobulins serve as receptors which, upon binding of a specific antigen, trigger the clonal expansion and differentiation of B lymphocytes into immunoglobulins-secreting plasma cells. Secreted immunoglobulins mediate the effector phase of humoral immunity, which results in the elimination of bound antigens. The antigen binding site is formed by the variable domain of one heavy chain, together with that of its associated light chain. Thus, each immunoglobulin has two antigen binding sites with remarkable affinity for a particular antigen. The variable domains are assembled by a process called V-(D)-J rearrangement and can then be subjected to somatic hypermutations which, after exposure to antigen and selection, allow affinity maturation for a particular antigen. Ig alpha is the major immunoglobulin class in body secretions. The polypeptide is Immunoglobulin heavy constant alpha 1 (Homo sapiens (Human)).